Consider the following 483-residue polypeptide: MTTRTVQRNLWASAAVVLVLLLLWTDTTGGYFAAIDETETSKNCFCELEGSINDCSCDVDTVDHFNNMKIYPRLQSLLVKNFFRFYKVNLRQECPFWPDDSRCAMRFCQVENCEEQAIPQGIKDKGEHKEKAAFKYTREAQVGGSACSDGEDFDSSLGFLDTSISDQAHREFELWAKHDEAEEDFCIVDDHEEGSQYVDLLLNPERYTGYKGESAHRIWKSIYLENCFGGNNETANKFSNYVPHLDLRNVCLEQRAFYRIISGLHSSINIHLCSKYLLSESKDFLDPQGIWGPNVKEFKRRFSPETTSGEGPHWLRNLYFIYLIELRALAKAAPYLRREDYYTGIAEEDDEVKLAINDMLSVIENFQSHFDENALFSNGIASIKFKHDYKEKFRNISRIMSCVGCDKCKLWGKLQTQGLGTALKILYSEKLNLATESGLWDKPHIEADPIFRLSRTEIVALFNAFGRLSNSIYEMENFRCVLR.

Residues 1–29 form the signal peptide; it reads MTTRTVQRNLWASAAVVLVLLLLWTDTTG. Cystine bridges form between Cys-44/Cys-57, Cys-46/Cys-55, Cys-94/Cys-402, Cys-103/Cys-108, Cys-227/Cys-251, and Cys-405/Cys-408. The FAD site is built by Arg-206, Thr-208, and Trp-219. Asn-232 carries N-linked (GlcNAc...) asparagine glycosylation. 3 residues coordinate FAD: Ser-262, His-265, and Arg-301. The N-linked (GlcNAc...) asparagine glycan is linked to Asn-395.

The protein belongs to the EROs family. In terms of assembly, may function both as a monomer and a homodimer. The cofactor is FAD.

The protein localises to the endoplasmic reticulum membrane. Its function is as follows. Oxidoreductase involved in disulfide bond formation in the endoplasmic reticulum. Efficiently reoxidizes pdi-1, the enzyme catalyzing protein disulfide formation, in order to allow pdi-1 to sustain additional rounds of disulfide formation. Following pdi reoxidation, passes its electrons to molecular oxygen via FAD, leading to the production of reactive oxygen species (ROS) in the cell. The chain is Ero1-like protein (Ero1L) from Drosophila melanogaster (Fruit fly).